We begin with the raw amino-acid sequence, 90 residues long: Putative regulatory protein Cbei_1140 (90 aa).

The protein belongs to the RemA family.

The sequence is that of Putative regulatory protein Cbei_1140 from Clostridium beijerinckii (strain ATCC 51743 / NCIMB 8052) (Clostridium acetobutylicum).